The chain runs to 1105 residues: Probable diguanylate cyclase DgcE (1105 aa).

10 helical membrane passes run 9 to 29 (LIAL…SFIF), 38 to 58 (QFGT…VAFY), 64 to 84 (MWPG…ILLF), 88 to 108 (SLNM…AVLL), 127 to 147 (LALG…VLLT), 156 to 176 (FLIW…LGLL), 190 to 207 (LLFE…LSWL), 211 to 228 (YLPW…WSAV), 236 to 256 (FLIF…DPSL), and 270 to 290 (WLPF…MYAF). One can recognise a PAS 1 domain in the interval 300-370 (SETHFRNAME…QQVEKLISGE (71 aa)). 2 consecutive PAC domains span residues 374–426 (YSME…VNQQ) and 501–552 (FKLE…ALFQ). Residues 553 to 623 (EKERLHITLD…LMENIYSADT (71 aa)) form the PAS 2 domain. The PAC 3 domain occupies 626–680 (SAIEQDVVLHCRSGGSYDVHYSITPLSTLDGSNIGSVLVIQDVTESRKMLRQLSY). The GGDEF domain maps to 712 to 845 (QRHALVFIDL…GRGRVTVYEP (134 aa)). Aspartate 720 lines the Mg(2+) pocket. Substrate contacts are provided by asparagine 728, histidine 733, and aspartate 737. A Mg(2+)-binding site is contributed by aspartate 763. Aspartate 763 serves as the catalytic Proton acceptor. Residue arginine 783 coordinates substrate. The region spanning 855–1104 (AAMSLDEQWR…LLVNSSYFAI (250 aa)) is the EAL domain.

In terms of assembly, homodimer. Mg(2+) serves as cofactor.

The protein localises to the cell inner membrane. The catalysed reaction is 2 GTP = 3',3'-c-di-GMP + 2 diphosphate. It participates in purine metabolism; 3',5'-cyclic di-GMP biosynthesis. Its function is as follows. Catalyzes the synthesis of cyclic-di-GMP (c-di-GMP) via the condensation of 2 GTP molecules. Involved in the control of the switch from cell motility to adhesion via regulation of cellular levels of c-di-GMP. Part of a signaling cascade that regulates curli biosynthesis. The cascade is composed of two c-di-GMP control modules, in which c-di-GMP controlled by the DgcE/PdeH pair (module I) regulates the activity of the DgcM/PdeR pair (module II), which in turn regulates activity of the transcription factor MlrA and expression of the master biofilm regulator csgD. This Escherichia coli (strain K12) protein is Probable diguanylate cyclase DgcE.